A 186-amino-acid chain; its full sequence is Ribosome-recycling factor (186 aa).

This sequence belongs to the RRF family.

Its subcellular location is the cytoplasm. Its function is as follows. Responsible for the release of ribosomes from messenger RNA at the termination of protein biosynthesis. May increase the efficiency of translation by recycling ribosomes from one round of translation to another. The sequence is that of Ribosome-recycling factor from Allorhizobium ampelinum (strain ATCC BAA-846 / DSM 112012 / S4) (Agrobacterium vitis (strain S4)).